The chain runs to 164 residues: Interferon gamma (164 aa).

The N-terminal stretch at 1–19 (MTCQTYNLFVLSVIMIYYG) is a signal peptide. N42 and N61 each carry an N-linked (GlcNAc...) asparagine glycan.

The protein belongs to the type II (or gamma) interferon family. As to quaternary structure, homodimer.

Its subcellular location is the secreted. In terms of biological role, produced by lymphocytes activated by specific antigens or mitogens. IFN-gamma, in addition to having antiviral activity, has important immunoregulatory functions. It is a potent activator of macrophages, it has antiproliferative effects on transformed cells and it can potentiate the antiviral and antitumor effects of the type I interferons. This is Interferon gamma (IFNG) from Coturnix japonica (Japanese quail).